The sequence spans 205 residues: Macrophage immunometabolism regulator (205 aa).

The segment at 1–40 (MEVDINGVNRTNNSVPSTTEGSSPSKPDPEKPRCSSTPCS) is disordered. The span at 8-25 (VNRTNNSVPSTTEGSSPS) shows a compositional bias: polar residues.

This sequence belongs to the UNC119-binding protein family. In terms of assembly, interacts with unc119 family proteins; interaction preferentially takes place when unc119 proteins are unliganded with myristoylated proteins.

The protein localises to the cytoplasm. It is found in the cell projection. The protein resides in the cilium. In terms of biological role, may play a role in immune regulation through regulation of the macrophage function. May also play a role in trafficking of proteins via its interaction with unc119 family cargo adapters. May play a role in ciliary membrane localization. This is Macrophage immunometabolism regulator (macir) from Xenopus tropicalis (Western clawed frog).